Reading from the N-terminus, the 271-residue chain is MSYLLRKPQSHEVSNGVKLVHEVTTSNSDLTYVEFKVLDLASGSSYTEELKKQEICIVAVTGKITVTDHESTFENIGTRESVFERKPTDSVYISNDRAFEITAVSDARVALCYSPSEKQLPTKLIKAEDNGIEHRGQFSNKRTVHNILPDSDPSANSLLVVEVYTDSGNWSSYPPHKHDQDNLPEESFLEETYYHELDPGQGFVFQRVYTDDRSIDETMTVENENVVIVPAGYHPVGVPDGYTSYYLNVMAGPTRKWKFYNDPAHEWILER.

Belongs to the isomerase IolB family.

It carries out the reaction 5-deoxy-D-glucuronate = 5-dehydro-2-deoxy-D-gluconate. It functions in the pathway polyol metabolism; myo-inositol degradation into acetyl-CoA; acetyl-CoA from myo-inositol: step 4/7. In terms of biological role, involved in the isomerization of 5-deoxy-glucuronate (5DG) to 5-dehydro-2-deoxy-D-gluconate (DKG or 2-deoxy-5-keto-D-gluconate). This Bacillus subtilis subsp. natto protein is 5-deoxy-glucuronate isomerase.